Here is a 187-residue protein sequence, read N- to C-terminus: ATP synthase subunit b, chloroplastic (187 aa).

Residues leucine 29–leucine 49 traverse the membrane as a helical segment.

The protein belongs to the ATPase B chain family. In terms of assembly, F-type ATPases have 2 components, F(1) - the catalytic core - and F(0) - the membrane proton channel. F(1) has five subunits: alpha(3), beta(3), gamma(1), delta(1), epsilon(1). F(0) has four main subunits: a(1), b(1), b'(1) and c(10-14). The alpha and beta chains form an alternating ring which encloses part of the gamma chain. F(1) is attached to F(0) by a central stalk formed by the gamma and epsilon chains, while a peripheral stalk is formed by the delta, b and b' chains.

Its subcellular location is the plastid. The protein resides in the chloroplast thylakoid membrane. Its function is as follows. F(1)F(0) ATP synthase produces ATP from ADP in the presence of a proton or sodium gradient. F-type ATPases consist of two structural domains, F(1) containing the extramembraneous catalytic core and F(0) containing the membrane proton channel, linked together by a central stalk and a peripheral stalk. During catalysis, ATP synthesis in the catalytic domain of F(1) is coupled via a rotary mechanism of the central stalk subunits to proton translocation. Component of the F(0) channel, it forms part of the peripheral stalk, linking F(1) to F(0). This is ATP synthase subunit b, chloroplastic from Angiopteris evecta (Mule's foot fern).